Here is a 315-residue protein sequence, read N- to C-terminus: Universal stress protein E (315 aa).

The protein belongs to the universal stress protein A family.

The protein localises to the cytoplasm. Required for resistance to DNA-damaging agents. The polypeptide is Universal stress protein E (uspE) (Salmonella typhi).